The chain runs to 269 residues: Cbp/p300-interacting transactivator 2 (269 aa).

Positions 142 to 200 (AGHQMNGTNQHFRDCNPKHSGGSSTPGGAGGSGTPGGSGGTSGGAGGSSAGGSGGGSTM) are disordered. Over residues 165-198 (STPGGAGGSGTPGGSGGTSGGAGGSSAGGSGGGS) the composition is skewed to gly residues.

It belongs to the CITED family. In terms of assembly, interacts (via C-terminus) with EP300 (via CH1 domain); the interaction is stimulated in response to hypoxia. Interacts with PPARA. Interacts (via C-terminus) with TFAP2A, TFAP2B and TFAP2C. Interacts (via C-terminus) with SMAD2. Interacts (via C-terminus) with SMAD3 (via MH2 domain). Interacts with LHX2 (via LIM domains). Interacts with WT1 isoform 1 and isoform 3. Ubiquitous.

The protein resides in the nucleus. In terms of biological role, transcriptional coactivator of the p300/CBP-mediated transcription complex. Acts as a bridge, linking TFAP2 transcription factors and the p300/CBP transcriptional coactivator complex in order to stimulate TFAP2-mediated transcriptional activation. Positively regulates TGF-beta signaling through its association with the SMAD/p300/CBP-mediated transcriptional coactivator complex. Stimulates the peroxisome proliferator-activated receptors PPARA transcriptional activity. Enhances estrogen-dependent transactivation mediated by estrogen receptors. Also acts as a transcriptional corepressor; interferes with the binding of the transcription factors HIF1A or STAT2 and the p300/CBP transcriptional coactivator complex. Participates in sex determination and early gonad development by stimulating transcription activation of SRY. Plays a role in controlling left-right patterning during embryogenesis; potentiates transcriptional activation of NODAL-mediated gene transcription in the left lateral plate mesoderm (LPM). Plays an essential role in differentiation of the adrenal cortex from the adrenogonadal primordium (AGP); stimulates WT1-mediated transcription activation thereby up-regulating the nuclear hormone receptor NR5A1 promoter activity. Associates with chromatin to the PITX2 P1 promoter region. The protein is Cbp/p300-interacting transactivator 2 (Cited2) of Mus musculus (Mouse).